We begin with the raw amino-acid sequence, 174 residues long: MCLPFFTSINSSGLFKAVSWRIIESFLLELFFIFYSSFSWSSSLSSSEGTGAGTGTGTGTGTGTGTGTGTGTGTGTGTGTGTGTGTGTGTGTGTGTGTGTGTGTGTGTGTGTGTGTGTGTGTGTGTGTGTGTGTGTGTIWEGELVFFYAECKGYPKIKGVFWVVSFFYDTAKNV.

The segment at 46-134 (SSEGTGAGTG…GTGTGTGTGT (89 aa)) is disordered. Tandem repeats lie at residues 49 to 50 (GT), 51 to 52 (GA), 53 to 54 (GT), 55 to 56 (GT), 57 to 58 (GT), 59 to 60 (GT), 61 to 62 (GT), 63 to 64 (GT), 65 to 66 (GT), 67 to 68 (GT), 69 to 70 (GT), 71 to 72 (GT), 73 to 74 (GT), 75 to 76 (GT), 77 to 78 (GT), 79 to 80 (GT), 81 to 82 (GT), 83 to 84 (GT), 85 to 86 (GT), 87 to 88 (GT), 89 to 90 (GT), 91 to 92 (GT), 93 to 94 (GT), 95 to 96 (GT), 97 to 98 (GT), 99 to 100 (GT), 101 to 102 (GT), 103 to 104 (GT), 105 to 106 (GT), 107 to 108 (GT), 109 to 110 (GT), 111 to 112 (GT), 113 to 114 (GT), 115 to 116 (GT), 117 to 118 (GT), 119 to 120 (GT), 121 to 122 (GT), 123 to 124 (GT), 125 to 126 (GT), 127 to 128 (GT), 129 to 130 (GT), 131 to 132 (GT), 133 to 134 (GT), 135 to 136 (GT), and 137 to 138 (GT). The segment at 49–138 (GTGAGTGTGT…GTGTGTGTGT (90 aa)) is 45 X 2 AA tandem repeats of G-[TA]. Residues 50–134 (TGAGTGTGTG…GTGTGTGTGT (85 aa)) are compositionally biased toward gly residues.

The protein resides in the plastid. It localises to the chloroplast. This is Period clock protein from Acetabularia acetabulum (Mermaid's wine glass).